The sequence spans 873 residues: Disks large homolog 1 (873 aa).

The L27 domain maps to 4 to 64 (RQKDAQRALQ…YYEVSLQDTE (61 aa)). Residues 62–135 (DTEDKPIEDS…SPHIPGDARP (74 aa)) are disordered. Residues 63-77 (TEDKPIEDSSLKSRE) are compositionally biased toward basic and acidic residues. Positions 85–96 (WNLSVPPSTTGP) are enriched in polar residues. PDZ domains are found at residues 230 to 317 (EITL…RRRK) and 325 to 412 (DVKL…AKPT). Positions 441 to 456 (SYLSQPLTPATPSRYS) are enriched in polar residues. The interval 441–464 (SYLSQPLTPATPSRYSPVSKGMLG) is disordered. The region spanning 474–555 (KIVLHRGTTG…TVTIIAQYRP (82 aa)) is the PDZ 3 domain. The tract at residues 636-662 (NKDSGEQDTSDVDQHVTSNASDSESSF) is disordered. The segment covering 650–662 (HVTSNASDSESSF) has biased composition (polar residues). Residues 683 to 858 (SRPVIILGPM…IYNQVKQIIE (176 aa)) form the Guanylate kinase-like domain.

Belongs to the MAGUK family.

It localises to the cell membrane. It is found in the endoplasmic reticulum membrane. The protein localises to the cell junction. Its subcellular location is the apical cell membrane. Its function is as follows. Essential multidomain scaffolding protein required for normal development. Recruits channels, receptors and signaling molecules to discrete plasma membrane domains in polarized cells. Promotes epithelial cell layer barrier function via maintaining cell-cell adhesion. May play a role in adherens junction assembly, signal transduction and cell proliferation. May play a role in synapse assembly and function. This chain is Disks large homolog 1 (dlg1), found in Danio rerio (Zebrafish).